Consider the following 400-residue polypeptide: NADH-ubiquinone oxidoreductase 49 kDa subunit (400 aa).

The protein belongs to the complex I 49 kDa subunit family.

Its subcellular location is the mitochondrion. The catalysed reaction is a ubiquinone + NADH + 5 H(+)(in) = a ubiquinol + NAD(+) + 4 H(+)(out). Core subunit of the mitochondrial membrane respiratory chain NADH dehydrogenase (Complex I) that is believed to belong to the minimal assembly required for catalysis. Complex I functions in the transfer of electrons from NADH to the respiratory chain. The immediate electron acceptor for the enzyme is believed to be ubiquinone. Component of the iron-sulfur (IP) fragment of the enzyme. Component of the iron-sulfur (IP) fragment of the enzyme. The chain is NADH-ubiquinone oxidoreductase 49 kDa subunit (NAD7) from Paramecium tetraurelia.